A 54-amino-acid polypeptide reads, in one-letter code: MARNDIRPIIKLKSTAGTGYTYVTRKNKRNNPDRITLKKFDPIARKHVEFREER.

This sequence belongs to the bacterial ribosomal protein bL33 family.

The chain is Large ribosomal subunit protein bL33 from Corynebacterium jeikeium (strain K411).